Here is a 433-residue protein sequence, read N- to C-terminus: 3-phosphoshikimate 1-carboxyvinyltransferase (433 aa).

3-phosphoshikimate is bound by residues Lys-22, Ser-23, and Arg-27. Lys-22 is a phosphoenolpyruvate binding site. Gly-94 and Arg-123 together coordinate phosphoenolpyruvate. Residues Ser-168, Gln-170, Asp-319, and Lys-346 each contribute to the 3-phosphoshikimate site. A phosphoenolpyruvate-binding site is contributed by Gln-170. The Proton acceptor role is filled by Asp-319. 2 residues coordinate phosphoenolpyruvate: Arg-350 and Arg-392.

It belongs to the EPSP synthase family. Monomer.

The protein localises to the cytoplasm. The enzyme catalyses 3-phosphoshikimate + phosphoenolpyruvate = 5-O-(1-carboxyvinyl)-3-phosphoshikimate + phosphate. It participates in metabolic intermediate biosynthesis; chorismate biosynthesis; chorismate from D-erythrose 4-phosphate and phosphoenolpyruvate: step 6/7. Functionally, catalyzes the transfer of the enolpyruvyl moiety of phosphoenolpyruvate (PEP) to the 5-hydroxyl of shikimate-3-phosphate (S3P) to produce enolpyruvyl shikimate-3-phosphate and inorganic phosphate. The sequence is that of 3-phosphoshikimate 1-carboxyvinyltransferase from Roseiflexus sp. (strain RS-1).